A 159-amino-acid chain; its full sequence is Phosphopantetheine adenylyltransferase (159 aa).

A substrate-binding site is contributed by T10. ATP contacts are provided by residues T10–F11 and H18. Substrate-binding residues include K42, M74, and R88. Residues G89–R91, E99, and W124–S130 each bind ATP.

Belongs to the bacterial CoaD family. As to quaternary structure, homohexamer. Mg(2+) serves as cofactor.

The protein resides in the cytoplasm. It carries out the reaction (R)-4'-phosphopantetheine + ATP + H(+) = 3'-dephospho-CoA + diphosphate. Its pathway is cofactor biosynthesis; coenzyme A biosynthesis; CoA from (R)-pantothenate: step 4/5. Functionally, reversibly transfers an adenylyl group from ATP to 4'-phosphopantetheine, yielding dephospho-CoA (dPCoA) and pyrophosphate. The chain is Phosphopantetheine adenylyltransferase from Salmonella agona (strain SL483).